The primary structure comprises 175 residues: Adenine phosphoribosyltransferase (175 aa).

This sequence belongs to the purine/pyrimidine phosphoribosyltransferase family. As to quaternary structure, homodimer.

It localises to the cytoplasm. It carries out the reaction AMP + diphosphate = 5-phospho-alpha-D-ribose 1-diphosphate + adenine. The protein operates within purine metabolism; AMP biosynthesis via salvage pathway; AMP from adenine: step 1/1. Its function is as follows. Catalyzes a salvage reaction resulting in the formation of AMP, that is energically less costly than de novo synthesis. In Thermosipho melanesiensis (strain DSM 12029 / CIP 104789 / BI429), this protein is Adenine phosphoribosyltransferase.